Here is a 728-residue protein sequence, read N- to C-terminus: 1,4-alpha-glucan branching enzyme GlgB (728 aa).

Aspartate 405 functions as the Nucleophile in the catalytic mechanism. The Proton donor role is filled by glutamate 458.

It belongs to the glycosyl hydrolase 13 family. GlgB subfamily. In terms of assembly, monomer.

It carries out the reaction Transfers a segment of a (1-&gt;4)-alpha-D-glucan chain to a primary hydroxy group in a similar glucan chain.. Its pathway is glycan biosynthesis; glycogen biosynthesis. Functionally, catalyzes the formation of the alpha-1,6-glucosidic linkages in glycogen by scission of a 1,4-alpha-linked oligosaccharide from growing alpha-1,4-glucan chains and the subsequent attachment of the oligosaccharide to the alpha-1,6 position. The protein is 1,4-alpha-glucan branching enzyme GlgB of Escherichia coli O157:H7.